Reading from the N-terminus, the 375-residue chain is Thiamine-phosphate synthase (375 aa).

Residues 1–127 are unknown; the sequence is MTNAESRTVL…AACIESIRYQ (127 aa). Residues 128 to 375 are thiamine-phosphate synthase; that stretch reads CYATFRELEL…SSDVCPLPND (248 aa). Residues 183–185 and Asn215 each bind 4-amino-2-methyl-5-(diphosphooxymethyl)pyrimidine; that span reads QLR. Mg(2+)-binding residues include Asp216 and Glu235. 4-amino-2-methyl-5-(diphosphooxymethyl)pyrimidine is bound by residues Ser254 and Lys283. 2-[(2R,5Z)-2-carboxy-4-methylthiazol-5(2H)-ylidene]ethyl phosphate is bound at residue Gly315.

Belongs to the thiamine-phosphate synthase family. Mg(2+) is required as a cofactor.

It carries out the reaction 2-[(2R,5Z)-2-carboxy-4-methylthiazol-5(2H)-ylidene]ethyl phosphate + 4-amino-2-methyl-5-(diphosphooxymethyl)pyrimidine + 2 H(+) = thiamine phosphate + CO2 + diphosphate. It catalyses the reaction 2-(2-carboxy-4-methylthiazol-5-yl)ethyl phosphate + 4-amino-2-methyl-5-(diphosphooxymethyl)pyrimidine + 2 H(+) = thiamine phosphate + CO2 + diphosphate. The enzyme catalyses 4-methyl-5-(2-phosphooxyethyl)-thiazole + 4-amino-2-methyl-5-(diphosphooxymethyl)pyrimidine + H(+) = thiamine phosphate + diphosphate. Its pathway is cofactor biosynthesis; thiamine diphosphate biosynthesis; thiamine phosphate from 4-amino-2-methyl-5-diphosphomethylpyrimidine and 4-methyl-5-(2-phosphoethyl)-thiazole: step 1/1. In terms of biological role, condenses 4-methyl-5-(beta-hydroxyethyl)thiazole monophosphate (THZ-P) and 2-methyl-4-amino-5-hydroxymethyl pyrimidine pyrophosphate (HMP-PP) to form thiamine monophosphate (TMP). The chain is Thiamine-phosphate synthase (thiE) from Rhodopirellula baltica (strain DSM 10527 / NCIMB 13988 / SH1).